A 236-amino-acid chain; its full sequence is T-cell surface glycoprotein CD8 alpha chain (236 aa).

Positions 1-26 are cleaved as a signal peptide; sequence MASRVICFLSLNLLLLDVITRLQVSG. Positions 27–130 constitute an Ig-like V-type domain; sequence QLQLSPKKVD…ITSNSVMYFS (104 aa). The Extracellular portion of the chain corresponds to 27–189; it reads QLQLSPKKVD…MGLGFACDIY (163 aa). Cys47 and Cys119 are disulfide-bonded. A glycan (N-linked (GlcNAc...) asparagine) is linked at Asn63. Thr144 carries O-linked (GalNAc...) threonine; partial glycosylation. 4 O-linked (GalNAc...) threonine glycosylation sites follow: Thr148, Thr152, Thr158, and Thr160. The disordered stretch occupies residues 150–170; sequence APTPVPPPTGTPRPLRPEACR. Residues 190-210 form a helical membrane-spanning segment; sequence IWAPLAGICAVLLLSLVITLI. A lipid anchor (S-palmitoyl cysteine) is attached at Cys211. The Cytoplasmic segment spans residues 211–236; sequence CCHRNRRRVCKCPRPLVKPRPSEKFV.

As to quaternary structure, forms disulfide-linked heterodimers with CD8B at the cell surface. Also forms homodimers in several cell types including NK-cells or peripheral blood T-lymphocytes. Interacts with the MHC class I HLA-A/B2M dimer. Interacts with LCK in a zinc-dependent manner. Post-translationally, palmitoylated, but association with CD8B seems to be more important for the enrichment of CD8A in lipid rafts. O-glycosylated. In terms of processing, phosphorylated in cytotoxic T-lymphocytes (CTLs) following activation.

The protein localises to the cell membrane. Its function is as follows. Integral membrane glycoprotein that plays an essential role in the immune response and serves multiple functions in responses against both external and internal offenses. In T-cells, functions primarily as a coreceptor for MHC class I molecule:peptide complex. The antigens presented by class I peptides are derived from cytosolic proteins while class II derived from extracellular proteins. Interacts simultaneously with the T-cell receptor (TCR) and the MHC class I proteins presented by antigen presenting cells (APCs). In turn, recruits the Src kinase LCK to the vicinity of the TCR-CD3 complex. LCK then initiates different intracellular signaling pathways by phosphorylating various substrates ultimately leading to lymphokine production, motility, adhesion and activation of cytotoxic T-lymphocytes (CTLs). This mechanism enables CTLs to recognize and eliminate infected cells and tumor cells. In NK-cells, the presence of CD8A homodimers at the cell surface provides a survival mechanism allowing conjugation and lysis of multiple target cells. CD8A homodimer molecules also promote the survival and differentiation of activated lymphocytes into memory CD8 T-cells. The polypeptide is T-cell surface glycoprotein CD8 alpha chain (Cd8a) (Rattus norvegicus (Rat)).